We begin with the raw amino-acid sequence, 473 residues long: H(+)/Cl(-) exchange transporter ClcA (473 aa).

Topologically, residues 1–32 are cytoplasmic; that stretch reads MKTDTPSLETPQAARLRRRQLIRQLLERDKTP. A helical transmembrane segment spans residues 33-69; it reads LAILFMAAVVGTLVGLAAVAFDKGVAWLQNQRMGALV. At 70 to 76 the chain is on the periplasmic side; sequence HTADNYP. A helical membrane pass occupies residues 77 to 100; that stretch reads LLLTVAFLCSAVLAMFGYFLVRKY. Positions 106–110 match the Selectivity filter part_1 motif; that stretch reads GSGIP. Ser-107 lines the chloride pocket. The helical intramembrane region spans 109 to 116; it reads IPEIEGAL. The Cytoplasmic segment spans residues 117-123; it reads EDQRPVR. 2 helical membrane passes run 124 to 141 and 148 to 166; these read WWRV…TLGG and EGPT…LDIF. Positions 146-150 match the Selectivity filter part_2 motif; that stretch reads GREGP. Residues 167-176 lie on the Cytoplasmic side of the membrane; it reads RLKGDEARHT. 2 consecutive intramembrane regions (helical) follow at residues 177 to 189 and 193 to 201; these read LLAT…LAAA and PLAGILFII. The Cytoplasmic segment spans residues 202 to 214; the sequence is EEMRPQFRYTLIS. A helical membrane pass occupies residues 215-232; sequence IKAVFIGVIMSTIMYRIF. The Periplasmic portion of the chain corresponds to 233–252; that stretch reads NHEVALIDVGKLSDAPLNTL. A helical membrane pass occupies residues 253 to 281; sequence WLYLILGIIFGIFGPIFNKWVLGMQDLLH. The Cytoplasmic segment spans residues 282 to 287; the sequence is RVHGGN. Residues 288–309 traverse the membrane as a helical segment; the sequence is ITKWVLMGGAIGGLCGLLGFVA. The Periplasmic segment spans residues 310–329; the sequence is PATSGGGFNLIPIATAGNFS. A run of 2 helical transmembrane segments spans residues 330-349 and 355-376; these read MGML…LCFS and GIFA…MVAV. The short motif at 355-359 is the Selectivity filter part_3 element; that stretch reads GIFAP. Chloride-binding residues include Ile-356 and Phe-357. The Periplasmic portion of the chain corresponds to 377–386; sequence ELFPQYHLEA. The helical intramembrane region spans 387-401; the sequence is GTFAIAGMGALLAAS. The segment at residues 402-404 is an intramembrane region (note=Loop between two helices); it reads IRA. Positions 405–416 form an intramembrane region, helical; sequence PLTGIILVLEMT. The segment at residues 417 to 421 is an intramembrane region (note=Loop between two helices); the sequence is DNYQL. Residues 422-438 form a helical membrane-spanning segment; sequence ILPMIITGLGATLLAQF. Topologically, residues 439-473 are cytoplasmic; sequence TGGKPLYSAILARTLAKQEAEQLARSKAASASENT. Tyr-445 serves as a coordination point for chloride.

This sequence belongs to the chloride channel (TC 2.A.49) family. ClcA subfamily. In terms of assembly, homodimer.

The protein localises to the cell inner membrane. It catalyses the reaction 2 chloride(in) + H(+)(out) = 2 chloride(out) + H(+)(in). Its function is as follows. Proton-coupled chloride transporter. Functions as antiport system and exchanges two chloride ions for 1 proton. Probably acts as an electrical shunt for an outwardly-directed proton pump that is linked to amino acid decarboxylation, as part of the extreme acid resistance (XAR) response. The protein is H(+)/Cl(-) exchange transporter ClcA of Escherichia coli O139:H28 (strain E24377A / ETEC).